The following is a 149-amino-acid chain: Calmodulin (149 aa).

Ala2 is modified (N-acetylalanine). 4 EF-hand domains span residues 8–43 (EQIAEFKEAFSLFDKDGDGTITTKELGTVMRSLGQN), 44–79 (PTEAELQDMINEVDADGNGTIDFPEFLSLMARKMKD), 81–116 (DTEEELVEAFKVFDRDGNGLISAAELRHVMTNLGEK), and 117–149 (LTDEEVDEMIREADVDGDGHINYEEFVRMMMAK). Positions 21, 23, 25, 27, 32, 57, 59, 61, 63, 68, 94, 96, 98, and 105 each coordinate Ca(2+). Lys116 is subject to N6,N6,N6-trimethyllysine. Residues Asp130, Asp132, Asp134, His136, and Glu141 each coordinate Ca(2+).

This sequence belongs to the calmodulin family.

Functionally, calmodulin mediates the control of a large number of enzymes, ion channels and other proteins by Ca(2+). Among the enzymes to be stimulated by the calmodulin-Ca(2+) complex are a number of protein kinases and phosphatases. The protein is Calmodulin of Stylonychia lemnae (Ciliate).